The chain runs to 173 residues: MARVEL domain-containing protein 1 (173 aa).

Position 1 is an N-acetylmethionine (Met1). Over 1 to 29 (MLPPPPRQPPPQARAARGAVRLQRPFLRS) the chain is Cytoplasmic. Residues 26 to 166 (FLRSPLGVLR…SALYGCGRRC (141 aa)) form the MARVEL domain. The helical transmembrane segment at 30-50 (PLGVLRLLQLLAGAAFWITIA) threads the bilayer. The Extracellular portion of the chain corresponds to 51–59 (TSKYQGPVH). The helical transmembrane segment at 60 to 80 (FALFVSVLFWLLTLGLYFLTL) threads the bilayer. Residues 81–94 (LGKHELVPVLGSRW) are Cytoplasmic-facing. The chain crosses the membrane as a helical span at residues 95–115 (LMVNVAHDVLAAALYGAATGI). At 116–138 (MSDQMQRHSYCNLKDYPLPCAYH) the chain is on the extracellular side. A helical transmembrane segment spans residues 139 to 159 (AFLAAAVCGGVCHGLYLLSAL). The Cytoplasmic segment spans residues 160-173 (YGCGRRCQGKQEVA).

In terms of tissue distribution, widely expressed in normal tissues. Down-regulated in multiple primary tumors.

The protein localises to the cell membrane. Its subcellular location is the cytoplasm. The protein resides in the cytoskeleton. It is found in the nucleus. Microtubule-associated protein that exhibits cell cycle-dependent localization and can inhibit cell proliferation and migration. This Homo sapiens (Human) protein is MARVEL domain-containing protein 1 (MARVELD1).